A 782-amino-acid chain; its full sequence is Lysosome membrane protein 2-C (782 aa).

Residues 1–7 are Cytoplasmic-facing; sequence MVANNKG. Residues 8–28 form a helical membrane-spanning segment; that stretch reads LLIAGLLLSVIGAALFVISLA. Residues 29–739 are Lumenal-facing; it reads LLPSVLNVAT…QQFKQIQTVK (711 aa). Asn-77, Asn-105, Asn-191, Asn-219, Asn-234, Asn-243, Asn-281, Asn-368, Asn-387, Asn-401, Asn-427, Asn-432, Asn-451, Asn-465, Asn-501, Asn-536, Asn-540, Asn-595, Asn-605, Asn-613, Asn-646, and Asn-692 each carry an N-linked (GlcNAc...) asparagine glycan. Residues 740 to 760 traverse the membrane as a helical segment; it reads IAPVVVVSIFGGILLIAGLVM. At 761 to 782 the chain is on the cytoplasmic side; that stretch reads AINGFRKTFYNNNQYNGYNIIN. The short motif at 777-781 is the Tyrosine-type lysosomal sorting signal element; sequence GYNII.

Belongs to the CD36 family. Post-translationally, heavily glycosylated.

It is found in the lysosome membrane. May act as a lysosomal receptor. May be involved role in macropinocytosis and fluid phase exocytosis. The polypeptide is Lysosome membrane protein 2-C (lmpC) (Dictyostelium discoideum (Social amoeba)).